Consider the following 462-residue polypeptide: Cysteine--tRNA ligase (462 aa).

C30 serves as a coordination point for Zn(2+). The 'HIGH' region motif lies at 32 to 42 (MTVYDYCHIGH). Residues C214, H239, and E243 each contribute to the Zn(2+) site. Residues 271 to 275 (KMSKS) carry the 'KMSKS' region motif. Position 274 (K274) interacts with ATP.

This sequence belongs to the class-I aminoacyl-tRNA synthetase family. Monomer. Requires Zn(2+) as cofactor.

It localises to the cytoplasm. It catalyses the reaction tRNA(Cys) + L-cysteine + ATP = L-cysteinyl-tRNA(Cys) + AMP + diphosphate. The protein is Cysteine--tRNA ligase of Herminiimonas arsenicoxydans.